The following is a 338-amino-acid chain: UDP-glucose 4-epimerase (338 aa).

NAD(+) is bound by residues 11–12 (YI), 31–36 (DNLCNS), 58–59 (DI), 80–84 (FAGLK), N99, S124, Y149, K153, and F178. The substrate site is built by S124 and Y149. The active-site Proton acceptor is the Y149. Residues N179, 199–200 (NL), 216–218 (SVF), R231, and 292–295 (RSGD) contribute to the substrate site.

The protein belongs to the NAD(P)-dependent epimerase/dehydratase family. In terms of assembly, homodimer. It depends on NAD(+) as a cofactor.

It carries out the reaction UDP-alpha-D-glucose = UDP-alpha-D-galactose. The protein operates within carbohydrate metabolism; galactose metabolism. Its function is as follows. Involved in the metabolism of galactose. Catalyzes the conversion of UDP-galactose (UDP-Gal) to UDP-glucose (UDP-Glc) through a mechanism involving the transient reduction of NAD. By controlling the internal galactose concentration, it may be linked to the biosynthesis of lipopolysaccharide surface molecules, which are important for the pathogenesis of H.influenzae. The protein is UDP-glucose 4-epimerase (galE) of Haemophilus influenzae (strain ATCC 51907 / DSM 11121 / KW20 / Rd).